The primary structure comprises 276 residues: Large ribosomal subunit protein uL2 (276 aa).

Disordered regions lie at residues 29–54 (PEKS…SRRR) and 224–276 (AMNP…RGQR). Basic residues predominate over residues 256–276 (YKTRSKKKPSSKLIVKRRGQR).

Belongs to the universal ribosomal protein uL2 family. As to quaternary structure, part of the 50S ribosomal subunit. Forms a bridge to the 30S subunit in the 70S ribosome.

One of the primary rRNA binding proteins. Required for association of the 30S and 50S subunits to form the 70S ribosome, for tRNA binding and peptide bond formation. It has been suggested to have peptidyltransferase activity; this is somewhat controversial. Makes several contacts with the 16S rRNA in the 70S ribosome. The polypeptide is Large ribosomal subunit protein uL2 (Maridesulfovibrio salexigens (strain ATCC 14822 / DSM 2638 / NCIMB 8403 / VKM B-1763) (Desulfovibrio salexigens)).